Here is a 530-residue protein sequence, read N- to C-terminus: Hyalin (530 aa).

HYR domains are found at residues 1-66 (NVEI…TVTA), 67-150 (TDSI…NVVE), 151-234 (VDTT…NVVE), 235-319 (VDTT…NVVE), 320-403 (VDTT…NIVE), 404-486 (EDTT…TVNT), and 487-530 (VDTT…ASLV).

As to quaternary structure, homooligomer in presence of calcium. Post-translationally, glycosylated.

The protein resides in the secreted. Its subcellular location is the extracellular space. It localises to the extracellular matrix. Functionally, major constituent of the hyaline layer. The hyaline layer of echinoderm embryos is an extraembryonic matrix that functions as a substrate for cell adhesion through early development. This chain is Hyalin, found in Lytechinus variegatus (Green sea urchin).